The primary structure comprises 200 residues: GTP-binding protein ypt2 (200 aa).

Residue 16-23 (GDSGVGKS) coordinates GTP. The Effector region motif lies at 38–46 (FITTIGIDF). Residues 64-68 (DTAGQ) and 122-125 (NKCD) contribute to the GTP site. 2 S-geranylgeranyl cysteine lipidation sites follow: C199 and C200.

This sequence belongs to the small GTPase superfamily. Rab family.

Its subcellular location is the cell membrane. Functionally, protein transport. Probably involved in vesicular traffic. In Schizosaccharomyces pombe (strain 972 / ATCC 24843) (Fission yeast), this protein is GTP-binding protein ypt2 (ypt2).